The following is a 373-amino-acid chain: Transaldolase (373 aa).

Lys-143 serves as the catalytic Schiff-base intermediate with substrate.

Belongs to the transaldolase family. Type 2 subfamily.

The protein localises to the cytoplasm. The catalysed reaction is D-sedoheptulose 7-phosphate + D-glyceraldehyde 3-phosphate = D-erythrose 4-phosphate + beta-D-fructose 6-phosphate. It functions in the pathway carbohydrate degradation; pentose phosphate pathway; D-glyceraldehyde 3-phosphate and beta-D-fructose 6-phosphate from D-ribose 5-phosphate and D-xylulose 5-phosphate (non-oxidative stage): step 2/3. Its function is as follows. Transaldolase is important for the balance of metabolites in the pentose-phosphate pathway. The chain is Transaldolase (tal) from Mycobacterium tuberculosis (strain ATCC 25618 / H37Rv).